A 155-amino-acid chain; its full sequence is Fibroblast growth factor 1 (155 aa).

The residue at position 2 (Ala-2) is an N-acetylalanine. The short motif at Lys-24 to Lys-27 is the Nuclear localization signal element. Heparin is bound by residues Lys-24–Leu-28 and Ile-113–Lys-116.

The protein belongs to the heparin-binding growth factors family. Monomer. Homodimer. Interacts with FGFR1, FGFR2, FGFR3 and FGFR4. Affinity between fibroblast growth factors (FGFs) and their receptors is increased by heparan sulfate glycosaminoglycans that function as coreceptors. Found in a complex with FGFBP1, FGF1 and FGF2. Interacts with FGFBP1. Part of a Cu(2+)-dependent multiprotein aggregate containing FGF1, S100A13 and SYT1. Interacts with S100A13. Interacts with FGFBP1. Interacts with LRRC59. Interacts with CSNKA, CSNKB and FIBP. While binding with LRRC59, CSNKA and FIBP seem mutually exclusive, CSNKB and FIBP may cooperatively interact with FGF1. Interacts with SYT1. Forms a ternary complex with FGFR1 and ITGAV:ITGB3 and induces the recruitment of PTPN11 to the complex. In the nucleus, phosphorylated by PKC/PRKCD.

Its subcellular location is the secreted. It is found in the cytoplasm. It localises to the cell cortex. The protein resides in the cytosol. The protein localises to the nucleus. Its function is as follows. Plays an important role in the regulation of cell survival, cell division, angiogenesis, cell differentiation and cell migration. Functions as a potent mitogen in vitro. Acts as a ligand for FGFR1 and integrins. Binds to FGFR1 in the presence of heparin leading to FGFR1 dimerization and activation via sequential autophosphorylation on tyrosine residues which act as docking sites for interacting proteins, leading to the activation of several signaling cascades. Binds to integrin ITGAV:ITGB3. Its binding to integrin, subsequent ternary complex formation with integrin and FGFR1, and the recruitment of PTPN11 to the complex are essential for FGF1 signaling. Induces the phosphorylation and activation of FGFR1, FRS2, MAPK3/ERK1, MAPK1/ERK2 and AKT1. Can induce angiogenesis. The chain is Fibroblast growth factor 1 (FGF1) from Bos taurus (Bovine).